The primary structure comprises 493 residues: MASGILVNVKEEVTCPICLELLTQPLSLDCGHSFCQACLTANHKKSMLDKGESSCPVCRISYQPENIRPNRHVANIVEKLREVKLSPEGQKVDHCARHGEKLLLFCQEDGKVICWLCERSQEHRGHHTFLTEEVAREYQVKLQAALEMLRQKQQEAEELEADIREEKASWKTQIQYDKTNVLADFEQLRDILDWEESNELQNLEKEEEDILKSLTNSETEMVQQTQSLRELISDLEHRLQGSVMELLQGVDGVIKRTENVTLKKPETFPKNQRRVFRAPDLKGMLEVFRELTDVRRYWVDVTVAPNNISCAVISEDKRQVSSPKPQIIYGARGTRYQTFVNFNYCTGILGSQSITSGKHYWEVDVSKKTAWILGVCAGFQPDAMCNIEKNENYQPKYGYWVIGLEEGVKCSAFQDSSFHTPSVPFIVPLSVIICPDRVGVFLDYEACTVSFFNITNHGFLIYKFSHCSFSQPVFPYLNPRKCGVPMTLCSPSS.

At Ala2 the chain carries N-acetylalanine. Residues Cys15–Arg59 form an RING-type zinc finger. Ser86 carries the post-translational modification Phosphoserine. The segment at Gln90–Glu132 adopts a B box-type zinc-finger fold. Cys95, His98, Cys117, and His123 together coordinate Zn(2+). Positions Leu130–Gly241 form a coiled coil. The tract at residues Phe185–Asn198 is required for interaction with GABARAP and for autophagy. In terms of domain architecture, B30.2/SPRY spans Leu281–Ser493.

Belongs to the TRIM/RBCC family. In terms of assembly, can form homodimers and homotrimers. In addition to lower-order dimerization, also exhibits a higher-order multimerization and both low- and high-order multimerizations are essential for its restriction activity. Isoform Delta interacts with BTBD1 and BTBD2. Interacts with PSMC4, PSMC5, PSMD7 and HSPA8/HSC70. Interacts (via B30.2/SPRY domain) with HSPA1A/B. Interacts with PSMC2, MAP3K7/TAK1, TAB2 and TAB3. Interacts with SQSTM1. Interacts with TRIM6 and TRIM34. Interacts with ULK1 (phosphorylated form), GABARAP, GABARAPL1, GABARAPL2, MAP1LC3A, MAP1LC3C and BECN1. Post-translationally, degraded in a proteasome-independent fashion in the absence of viral infection but in a proteasome-dependent fashion following exposure to restriction sensitive virus. In terms of processing, autoubiquitinated in a RING finger- and UBE2D2-dependent manner. Monoubiquitinated by TRIM21. Deubiquitinated by Yersinia YopJ. Ubiquitination may not lead to proteasomal degradation.

It localises to the cytoplasm. Its subcellular location is the nucleus. It catalyses the reaction S-ubiquitinyl-[E2 ubiquitin-conjugating enzyme]-L-cysteine + [acceptor protein]-L-lysine = [E2 ubiquitin-conjugating enzyme]-L-cysteine + N(6)-ubiquitinyl-[acceptor protein]-L-lysine.. The protein operates within protein modification; protein ubiquitination. In terms of biological role, capsid-specific restriction factor that prevents infection from non-host-adapted retroviruses. Blocks viral replication early in the life cycle, after viral entry but before reverse transcription. In addition to acting as a capsid-specific restriction factor, also acts as a pattern recognition receptor that activates innate immune signaling in response to the retroviral capsid lattice. Binding to the viral capsid triggers its E3 ubiquitin ligase activity, and in concert with the heterodimeric ubiquitin conjugating enzyme complex UBE2V1-UBE2N (also known as UBC13-UEV1A complex) generates 'Lys-63'-linked polyubiquitin chains, which in turn are catalysts in the autophosphorylation of the MAP3K7/TAK1 complex (includes TAK1, TAB2, and TAB3). Activation of the MAP3K7/TAK1 complex by autophosphorylation results in the induction and expression of NF-kappa-B and MAPK-responsive inflammatory genes, thereby leading to an innate immune response in the infected cell. Restricts infection by N-tropic murine leukemia virus (N-MLV), equine infectious anemia virus (EIAV), simian immunodeficiency virus of macaques (SIVmac), feline immunodeficiency virus (FIV), and bovine immunodeficiency virus (BIV). Plays a role in regulating autophagy through activation of autophagy regulator BECN1 by causing its dissociation from its inhibitors BCL2 and TAB2. Also plays a role in autophagy by acting as a selective autophagy receptor which recognizes and targets HIV-1 capsid protein p24 for autophagic destruction. The chain is Tripartite motif-containing protein 5 (TRIM5) from Homo sapiens (Human).